A 45-amino-acid polypeptide reads, in one-letter code: Defensin Tk-AMP-D4 (45 aa).

Disulfide bonds link Cys3–Cys45, Cys14–Cys34, Cys20–Cys39, and Cys24–Cys41.

Plant defense peptide. The sequence is that of Defensin Tk-AMP-D4 from Triticum kiharae (Wheat).